A 350-amino-acid polypeptide reads, in one-letter code: Peroxidase 10 (350 aa).

Residues 1-27 (MDHKMSMYLFVSYLAIFTLFFKGFVSS) form the signal peptide. 4 disulfides stabilise this stretch: cysteine 57/cysteine 137, cysteine 90/cysteine 95, cysteine 143/cysteine 346, and cysteine 222/cysteine 256. The active-site Proton acceptor is histidine 88. Aspartate 89, valine 92, glycine 94, aspartate 96, and serine 98 together coordinate Ca(2+). N-linked (GlcNAc...) asparagine glycosylation is present at asparagine 102. A substrate-binding site is contributed by proline 185. Asparagine 193 carries an N-linked (GlcNAc...) asparagine glycan. Histidine 215 contributes to the heme b binding site. Ca(2+) is bound at residue threonine 216. Ca(2+)-binding residues include aspartate 270, serine 273, and aspartate 278.

The protein belongs to the peroxidase family. Classical plant (class III) peroxidase subfamily. Heme b is required as a cofactor. Requires Ca(2+) as cofactor. In terms of tissue distribution, expressed in the whole plant, with the highest expression in roots.

It is found in the secreted. It carries out the reaction 2 a phenolic donor + H2O2 = 2 a phenolic radical donor + 2 H2O. Removal of H(2)O(2), oxidation of toxic reductants, biosynthesis and degradation of lignin, suberization, auxin catabolism, response to environmental stresses such as wounding, pathogen attack and oxidative stress. These functions might be dependent on each isozyme/isoform in each plant tissue. The chain is Peroxidase 10 (PER10) from Arabidopsis thaliana (Mouse-ear cress).